Reading from the N-terminus, the 51-residue chain is Large ribosomal subunit protein bL33 (51 aa).

Belongs to the bacterial ribosomal protein bL33 family.

The sequence is that of Large ribosomal subunit protein bL33 from Francisella philomiragia subsp. philomiragia (strain ATCC 25017 / CCUG 19701 / FSC 153 / O#319-036).